Consider the following 411-residue polypeptide: MWSGWWLWPLVAVCTADFFRDEAERIMRDSPVIDGHNDLPWQLLDMFNNRLQDERANLTTLAGTHTNIPKLRAGFVGGQFWSVYTPCDTQNKDAVRRTLEQMDVVHRMCRMYPETFLYVTSSAGIRQAFREGKVASLIGVEGGHSIDSSLGVLRALYQLGMRYLTLTHSCNTPWADNWLVDTGDSEPQSQGLSPFGQRVVKELNRLGVLIDLAHVSVATMKATLQLSRAPVIFSHSSAYSVCASRRNVPDDVLRLVKQTDSLVMVNFYNNYISCTNKANLSQVADHLDHIKEVAGARAVGFGGDFDGVPRVPEGLEDVSKYPDLIAELLRRNWTEAEVKGALADNLLRVFEAVEQASNLTQAPEEEPIPLDQLGGSCRTHYGYSSGASSLHRHWGLLLASLAPLVLCLSLL.

An N-terminal signal peptide occupies residues 1 to 16; the sequence is MWSGWWLWPLVAVCTA. Zn(2+) is bound by residues H36 and D38. N57 carries N-linked (GlcNAc...) asparagine glycosylation. Residues C87 and C170 are joined by a disulfide bond. E141 lines the Zn(2+) pocket. Residue H168 coordinates substrate. Residues H214 and H235 each contribute to the Zn(2+) site. A disulfide bridge links C242 with C274. Substrate is bound at residue R246. N279 carries N-linked (GlcNAc...) asparagine glycosylation. D304 is a binding site for substrate. 2 N-linked (GlcNAc...) asparagine glycosylation sites follow: N332 and N358. S385 is lipidated: GPI-anchor amidated serine. The propeptide at 386 to 411 is removed in mature form; sequence GASSLHRHWGLLLASLAPLVLCLSLL.

It belongs to the metallo-dependent hydrolases superfamily. Peptidase M19 family. In terms of assembly, homodimer; disulfide-linked. Zn(2+) serves as cofactor. In terms of tissue distribution, expressed in lung and kidneys.

The protein localises to the apical cell membrane. It is found in the cell projection. It localises to the microvillus membrane. The enzyme catalyses an L-aminoacyl-L-amino acid + H2O = 2 an L-alpha-amino acid. It catalyses the reaction leukotriene D4 + H2O = leukotriene E4 + glycine. The catalysed reaction is a beta-lactam + H2O = a substituted beta-amino acid. It carries out the reaction L-cystine-bis-glycine + 2 H2O = L-cystine + 2 glycine. The enzyme catalyses glycyldehydrophenylalanine + H2O = 2,3-didehydrophenylalanine + glycine. Inhibited by L-penicillamine. Beta-lactamase activity is inhibited by cilastatin. Its function is as follows. Hydrolyzes a wide range of dipeptides including the conversion of leukotriene D4 to leukotriene E4. Hydrolyzes cystinyl-bis-glycine (cys-bis-gly) formed during glutathione degradation. Also possesses beta lactamase activity and can hydrolyze the beta-lactam antibiotic imipenem. Functionally, independently of its dipeptidase activity, acts as an adhesion receptor for neutrophil recruitment from bloodstream into inflamed lungs and liver. This chain is Dipeptidase 1 (DPEP1), found in Homo sapiens (Human).